Consider the following 104-residue polypeptide: DNA-directed RNA polymerase subunit omega (104 aa).

The tract at residues Glu-53–Ile-104 is disordered. Basic and acidic residues predominate over residues Pro-63–Ile-104.

This sequence belongs to the RNA polymerase subunit omega family. In terms of assembly, the RNAP catalytic core consists of 2 alpha, 1 beta, 1 beta' and 1 omega subunit. When a sigma factor is associated with the core the holoenzyme is formed, which can initiate transcription.

The catalysed reaction is RNA(n) + a ribonucleoside 5'-triphosphate = RNA(n+1) + diphosphate. Its function is as follows. Promotes RNA polymerase assembly. Latches the N- and C-terminal regions of the beta' subunit thereby facilitating its interaction with the beta and alpha subunits. This chain is DNA-directed RNA polymerase subunit omega, found in Streptococcus pneumoniae serotype 2 (strain D39 / NCTC 7466).